Here is a 98-residue protein sequence, read N- to C-terminus: NADH-ubiquinone oxidoreductase chain 4L (98 aa).

3 helical membrane-spanning segments follow: residues 1-21 (MPVVYVNIFLAFIVSLTGLLI), 29-49 (SLLCLEGMMLSLFVMLTVTVL), and 61-81 (IILLVFAACEAALGLSLLVMV).

It belongs to the complex I subunit 4L family. In terms of assembly, core subunit of respiratory chain NADH dehydrogenase (Complex I) which is composed of 45 different subunits.

Its subcellular location is the mitochondrion inner membrane. The enzyme catalyses a ubiquinone + NADH + 5 H(+)(in) = a ubiquinol + NAD(+) + 4 H(+)(out). In terms of biological role, core subunit of the mitochondrial membrane respiratory chain NADH dehydrogenase (Complex I) which catalyzes electron transfer from NADH through the respiratory chain, using ubiquinone as an electron acceptor. Part of the enzyme membrane arm which is embedded in the lipid bilayer and involved in proton translocation. The polypeptide is NADH-ubiquinone oxidoreductase chain 4L (MT-ND4L) (Helarctos malayanus (Malayan sun bear)).